Reading from the N-terminus, the 334-residue chain is UstYa family oxidase aprY (334 aa).

The helical transmembrane segment at 55-75 threads the bilayer; that stretch reads IWILLTITNLIILGITVSMIV. A glycan (N-linked (GlcNAc...) asparagine) is linked at asparagine 112. The HXXHC 1 signature appears at 185–189; sequence HQIHC. An N-linked (GlcNAc...) asparagine glycan is attached at asparagine 214. The HXXHC 2 signature appears at 223–227; that stretch reads HLGHC. Basic and acidic residues predominate over residues 306 to 318; sequence SELGEKLGKHQKQ. The segment at 306-334 is disordered; it reads SELGEKLGKHQKQEGVLGQAGHQHTKRHE.

It belongs to the ustYa family.

It localises to the membrane. Its pathway is secondary metabolite biosynthesis. Its function is as follows. UstYa family oxidase; part of the gene cluster that mediates the biosynthesis of the asperipin-2a, a bicyclic peptide that possesses two macrocyclic ether rings consisting of 14- and 17-membered paracyclophans. Within the pathway, aprY is responsible for the synthesis of the bicyclic structure of asperipin-2a. The pathway starts with the processing of the precursor aprA by kexin proteases to produce 11 identical copies of the hexapeptide Phe-Tyr-Tyr-Thr-Gly-Tyr. Macrocyclization of asperipin-2a may accompany an alpha-hydroxylation-dehydration sequence to give an imine, which is readily hydrolyzed to yield putative ketone intermediate. The reductase aprR may be required for the final reduction to yield asperipin-2a. This is UstYa family oxidase aprY from Aspergillus flavus (strain ATCC 200026 / FGSC A1120 / IAM 13836 / NRRL 3357 / JCM 12722 / SRRC 167).